The following is a 566-amino-acid chain: Endoglucanase B (566 aa).

Positions 1–30 are cleaved as a signal peptide; the sequence is MKKRRSSKVILSLAIVVALLAAVEPNAALA. The Proton donor role is filled by Glu-177. Glu-299 acts as the Nucleophile in catalysis.

The protein belongs to the glycosyl hydrolase 5 (cellulase A) family.

It catalyses the reaction Endohydrolysis of (1-&gt;4)-beta-D-glucosidic linkages in cellulose, lichenin and cereal beta-D-glucans.. The sequence is that of Endoglucanase B (celB) from Paenibacillus lautus (Bacillus lautus).